Reading from the N-terminus, the 252-residue chain is Phosphate import ATP-binding protein PstB (252 aa).

In terms of domain architecture, ABC transporter spans 6 to 247 (IEVKNLNTYF…PKNKQTENYI (242 aa)). 38 to 45 (GPSGCGKS) lines the ATP pocket.

It belongs to the ABC transporter superfamily. Phosphate importer (TC 3.A.1.7) family. The complex is composed of two ATP-binding proteins (PstB), two transmembrane proteins (PstC and PstA) and a solute-binding protein (PstS).

The protein localises to the cell membrane. It catalyses the reaction phosphate(out) + ATP + H2O = ADP + 2 phosphate(in) + H(+). In terms of biological role, part of the ABC transporter complex PstSACB involved in phosphate import. Responsible for energy coupling to the transport system. The protein is Phosphate import ATP-binding protein PstB of Methanosphaera stadtmanae (strain ATCC 43021 / DSM 3091 / JCM 11832 / MCB-3).